A 94-amino-acid chain; its full sequence is Enhancer of yellow 2 transcription factor (94 aa).

This sequence belongs to the ENY2 family. As to quaternary structure, component of the nuclear pore complex (NPC)-associated AMEX complex (anchoring and mRNA export complex), composed of at least e(y)2 and xmas-2. Component of the SAGA transcription coactivator-HAT complexes, at least composed of Ada2b, e(y)2, Pcaf/Gcn5, Taf10 and Nipped-A/Trrap. Within the SAGA complex, e(y)2, Sgf11, and not/nonstop form an additional subcomplex of SAGA called the DUB module (deubiquitination module). Component of the THO complex, composed of at least e(y)2, HPR1, THO2, THOC5, THOC6 and THOC7. Interacts with e(y)1. Interacts with su(Hw) (via zinc fingers). Interacts with xmas-2; required for localization to the nuclear periphery. Interacts with the nuclear pore complex (NPC).

Its subcellular location is the nucleus. It localises to the nucleoplasm. It is found in the cytoplasm. Functionally, involved in mRNA export coupled transcription activation by association with both the AMEX and the SAGA complexes. The SAGA complex is a multiprotein complex that activates transcription by remodeling chromatin and mediating histone acetylation and deubiquitination. Within the SAGA complex, participates in a subcomplex that specifically deubiquitinates histone H2B. The SAGA complex is recruited to specific gene promoters by activators, where it is required for transcription. Required for nuclear receptor-mediated transactivation. Involved in transcription elongation by recruiting the THO complex onto nascent mRNA. The AMEX complex functions in docking export-competent ribonucleoprotein particles (mRNPs) to the nuclear entrance of the nuclear pore complex (nuclear basket). AMEX participates in mRNA export and accurate chromatin positioning in the nucleus by tethering genes to the nuclear periphery. The polypeptide is Enhancer of yellow 2 transcription factor (Drosophila mojavensis (Fruit fly)).